The sequence spans 329 residues: Peroxidase 30 (329 aa).

The signal sequence occupies residues 1-27 (MKTMTQLNIAVVVVVTVLIGMLRSSEA). 4 cysteine pairs are disulfide-bonded: cysteine 38-cysteine 116, cysteine 71-cysteine 76, cysteine 122-cysteine 324, and cysteine 201-cysteine 234. Residue histidine 69 is the Proton acceptor of the active site. Ca(2+) contacts are provided by aspartate 70, valine 73, glycine 75, aspartate 77, and serine 79. Residues asparagine 83 and asparagine 155 are each glycosylated (N-linked (GlcNAc...) asparagine). The tract at residues 141-165 (SWSVPTGRRDGRISNKTEATNNIPP) is disordered. The span at 156–165 (KTEATNNIPP) shows a compositional bias: polar residues. Proline 164 contacts substrate. Asparagine 169 is a glycosylation site (N-linked (GlcNAc...) asparagine). Histidine 194 is a binding site for heme b. Threonine 195 lines the Ca(2+) pocket. 2 N-linked (GlcNAc...) asparagine glycosylation sites follow: asparagine 210 and asparagine 240. Ca(2+) is bound by residues aspartate 247, serine 250, and aspartate 255. An N-linked (GlcNAc...) asparagine glycan is attached at asparagine 290.

It belongs to the peroxidase family. Classical plant (class III) peroxidase subfamily. The cofactor is heme b. Ca(2+) serves as cofactor. Mainly expressed in roots.

It localises to the secreted. It catalyses the reaction 2 a phenolic donor + H2O2 = 2 a phenolic radical donor + 2 H2O. Functionally, removal of H(2)O(2), oxidation of toxic reductants, biosynthesis and degradation of lignin, suberization, auxin catabolism, response to environmental stresses such as wounding, pathogen attack and oxidative stress. These functions might be dependent on each isozyme/isoform in each plant tissue. This chain is Peroxidase 30 (PER30), found in Arabidopsis thaliana (Mouse-ear cress).